The chain runs to 85 residues: MAHKKAGGSSRNGRDSHSKRLGVKRYGGEIIRAGGIIVRQRGTQFHPGDNVGIGRDHTLFAKVDGKIVFAVKGRMNRRTVAVIPS.

The interval 1–22 is disordered; sequence MAHKKAGGSSRNGRDSHSKRLG.

Belongs to the bacterial ribosomal protein bL27 family.

In Nitrosomonas europaea (strain ATCC 19718 / CIP 103999 / KCTC 2705 / NBRC 14298), this protein is Large ribosomal subunit protein bL27.